Here is a 710-residue protein sequence, read N- to C-terminus: Polyribonucleotide nucleotidyltransferase (710 aa).

2 residues coordinate Mg(2+): aspartate 487 and aspartate 493. A KH domain is found at 554 to 613 (PRIEVMNIPVDKIREVIGSGGKVIREIVEKTGAKINIEDDGTVKIASSSGKEIEAARKWI). The S1 motif domain occupies 623-691 (GQIYEGTVVK…ERGKVRLSMK (69 aa)).

Belongs to the polyribonucleotide nucleotidyltransferase family. Requires Mg(2+) as cofactor.

The protein resides in the cytoplasm. The catalysed reaction is RNA(n+1) + phosphate = RNA(n) + a ribonucleoside 5'-diphosphate. Involved in mRNA degradation. Catalyzes the phosphorolysis of single-stranded polyribonucleotides processively in the 3'- to 5'-direction. The sequence is that of Polyribonucleotide nucleotidyltransferase from Rhizobium rhizogenes (strain K84 / ATCC BAA-868) (Agrobacterium radiobacter).